Here is a 1379-residue protein sequence, read N- to C-terminus: DNA-directed RNA polymerase subunit beta (1379 aa).

It belongs to the RNA polymerase beta chain family. In terms of assembly, the RNAP catalytic core consists of 2 alpha, 1 beta, 1 beta' and 1 omega subunit. When a sigma factor is associated with the core the holoenzyme is formed, which can initiate transcription.

The catalysed reaction is RNA(n) + a ribonucleoside 5'-triphosphate = RNA(n+1) + diphosphate. In terms of biological role, DNA-dependent RNA polymerase catalyzes the transcription of DNA into RNA using the four ribonucleoside triphosphates as substrates. The protein is DNA-directed RNA polymerase subunit beta of Campylobacter fetus subsp. fetus (strain 82-40).